A 149-amino-acid chain; its full sequence is Globin (149 aa).

The 148-residue stretch at 2-149 (VLTKDEFDSL…KIFTGVAGQL (148 aa)) folds into the Globin domain. Position 100 (H100) interacts with heme.

Belongs to the globin family. As to quaternary structure, monomer.

Oxygen binding protein. In Isoparorchis hypselobagri (Giant trematode), this protein is Globin.